The sequence spans 142 residues: Deoxyuridine 5'-triphosphate nucleotidohydrolase (142 aa).

Substrate is bound by residues 62-64, N75, 79-81, and K89; these read RSG and TID.

This sequence belongs to the dUTPase family. Requires Mg(2+) as cofactor.

The enzyme catalyses dUTP + H2O = dUMP + diphosphate + H(+). It functions in the pathway pyrimidine metabolism; dUMP biosynthesis; dUMP from dCTP (dUTP route): step 2/2. This enzyme is involved in nucleotide metabolism: it produces dUMP, the immediate precursor of thymidine nucleotides and it decreases the intracellular concentration of dUTP so that uracil cannot be incorporated into DNA. This is Deoxyuridine 5'-triphosphate nucleotidohydrolase from Nautilia profundicola (strain ATCC BAA-1463 / DSM 18972 / AmH).